The chain runs to 565 residues: Ubiquitin carboxyl-terminal hydrolase 21 (565 aa).

The segment covering 1–14 (MPQASEHRLGRTRE) has biased composition (basic and acidic residues). Disordered regions lie at residues 1–103 (MPQA…LPLP), 109–128 (ARSK…ALGG), and 142–163 (LALR…LGGF). The span at 42-57 (APGPNPMLRPLPPRPG) shows a compositional bias: pro residues. Residues 58–70 (PPEERLKKLELGR) are compositionally biased toward basic and acidic residues. A compositionally biased stretch (low complexity) spans 71-82 (GRTSGPRPSGPL). The Nuclear export signal motif lies at 134-152 (ELGAALSRLALRPEPPPLR). The USP domain occupies 212–558 (VGLRNLGNTC…EGYVLFYQLM (347 aa)). Cys-221 serves as the catalytic Nucleophile. Zn(2+) is bound by residues Cys-384, Cys-387, Cys-437, and Cys-440. His-518 functions as the Proton acceptor in the catalytic mechanism.

The protein belongs to the peptidase C19 family. USP21 subfamily. As to quaternary structure, interacts with BEND3.

It localises to the cytoplasm. The protein resides in the nucleus. It catalyses the reaction Thiol-dependent hydrolysis of ester, thioester, amide, peptide and isopeptide bonds formed by the C-terminal Gly of ubiquitin (a 76-residue protein attached to proteins as an intracellular targeting signal).. Deubiquitinating enzyme that hydrolyzes 'Lys-6'- and 'Lys-11'-linked polyubiquitin. Also hydrolyzes heterotypic (mixed and branched) and homotypic chains. Important regulator of energy metabolism. Glucose and fatty acids trigger its nuclear translocation by CBP-dependent acetylation. In the nucleus, deubiquitinates and stabilizes the nuclear receptor PPARD regulating the expression of various genes involved in glucose and lipid metabolism and oxidative phosphorylation. Also acts as a negative regulator of the ribosome quality control (RQC) by mediating deubiquitination of 40S ribosomal proteins RPS10/eS10 and RPS20/uS10, thereby antagonizing ZNF598-mediated 40S ubiquitination. The sequence is that of Ubiquitin carboxyl-terminal hydrolase 21 (USP21) from Bos taurus (Bovine).